Reading from the N-terminus, the 120-residue chain is Putative gamma-glutamylcyclotransferase MJ1514 (120 aa).

7–10 (YGSL) provides a ligand contact to substrate. E74 functions as the Proton acceptor in the catalytic mechanism.

The protein belongs to the gamma-glutamylcyclotransferase family.

Its function is as follows. Putative gamma-glutamylcyclotransferase. This is Putative gamma-glutamylcyclotransferase MJ1514 from Methanocaldococcus jannaschii (strain ATCC 43067 / DSM 2661 / JAL-1 / JCM 10045 / NBRC 100440) (Methanococcus jannaschii).